The primary structure comprises 397 residues: Cytochrome b (397 aa).

4 helical membrane-spanning segments follow: residues 48-68 (FGSM…LLSA), 92-113 (WMLR…YAHI), 128-148 (WYFG…GYTL), and 193-213 (FYTL…LHLF). Positions 98 and 112 each coordinate heme b. Positions 197 and 211 each coordinate heme b. A ubiquinone is bound at residue His216. Helical transmembrane passes span 241 to 261 (IKDL…VCVD), 303 to 323 (AGGV…PTLH), 335 to 355 (LNQV…WIGA), and 362 to 382 (YIIL…WTPF).

This sequence belongs to the cytochrome b family. As to quaternary structure, the main subunits of complex b-c1 are: cytochrome b, cytochrome c1 and the Rieske protein. Heme b is required as a cofactor.

The protein resides in the mitochondrion inner membrane. Functionally, component of the ubiquinol-cytochrome c reductase complex (complex III or cytochrome b-c1 complex) that is part of the mitochondrial respiratory chain. The b-c1 complex mediates electron transfer from ubiquinol to cytochrome c. Contributes to the generation of a proton gradient across the mitochondrial membrane that is then used for ATP synthesis. This chain is Cytochrome b (MT-CYB), found in Mytilus edulis (Blue mussel).